The sequence spans 353 residues: Fe(3+) ions import ATP-binding protein FbpC (353 aa).

An ABC transporter domain is found at Val9 to Met239. Gly41 to Thr48 provides a ligand contact to ATP.

Belongs to the ABC transporter superfamily. Fe(3+) ion importer (TC 3.A.1.10) family. In terms of assembly, the complex is composed of two ATP-binding proteins (FbpC), two transmembrane proteins (FbpB) and a solute-binding protein (FbpA).

It is found in the cell inner membrane. The catalysed reaction is Fe(3+)(out) + ATP + H2O = Fe(3+)(in) + ADP + phosphate + H(+). Its function is as follows. Part of the ABC transporter complex FbpABC involved in Fe(3+) ions import. Responsible for energy coupling to the transport system. The protein is Fe(3+) ions import ATP-binding protein FbpC of Agrobacterium fabrum (strain C58 / ATCC 33970) (Agrobacterium tumefaciens (strain C58)).